Here is a 251-residue protein sequence, read N- to C-terminus: 2-C-methyl-D-erythritol 4-phosphate cytidylyltransferase (251 aa).

This sequence belongs to the IspD/TarI cytidylyltransferase family. IspD subfamily.

The catalysed reaction is 2-C-methyl-D-erythritol 4-phosphate + CTP + H(+) = 4-CDP-2-C-methyl-D-erythritol + diphosphate. Its pathway is isoprenoid biosynthesis; isopentenyl diphosphate biosynthesis via DXP pathway; isopentenyl diphosphate from 1-deoxy-D-xylulose 5-phosphate: step 2/6. Catalyzes the formation of 4-diphosphocytidyl-2-C-methyl-D-erythritol from CTP and 2-C-methyl-D-erythritol 4-phosphate (MEP). The polypeptide is 2-C-methyl-D-erythritol 4-phosphate cytidylyltransferase (Cupriavidus pinatubonensis (strain JMP 134 / LMG 1197) (Cupriavidus necator (strain JMP 134))).